The sequence spans 65 residues: MPKLKTSKAIAKRFKVSSSGKILRHKASKSHLLQKKSSKHRRHLSSTCQVDSRDAKNISINLPYL.

The tract at residues 18-50 (SSGKILRHKASKSHLLQKKSSKHRRHLSSTCQV) is disordered. Over residues 22–44 (ILRHKASKSHLLQKKSSKHRRHL) the composition is skewed to basic residues.

Belongs to the bacterial ribosomal protein bL35 family.

The protein resides in the plastid. It localises to the chloroplast. In Porphyra purpurea (Red seaweed), this protein is Large ribosomal subunit protein bL35c.